We begin with the raw amino-acid sequence, 97 residues long: Large ribosomal subunit protein bL27 (97 aa).

A propeptide spanning residues 1–12 (MLKMNLANLQLF) is cleaved from the precursor. Positions 14–37 (HKKGGGSTSNGRDSQAKRLGAKAA) are disordered.

This sequence belongs to the bacterial ribosomal protein bL27 family. In terms of processing, the N-terminus is cleaved by ribosomal processing cysteine protease Prp.

The protein is Large ribosomal subunit protein bL27 of Streptococcus agalactiae serotype III (strain NEM316).